We begin with the raw amino-acid sequence, 898 residues long: Chitin synthase 1 (898 aa).

The disordered stretch occupies residues 1–154; that stretch reads MDPRYGAQPM…PPQQGGGIQR (154 aa). The span at 9–21 shows a compositional bias: pro residues; that stretch reads PMPPRRSPSPGHP. 2 stretches are compositionally biased toward polar residues: residues 64-75 and 136-146; these read DHLSLNAAQSVD and DVPSEQYQDPP. A run of 5 helical transmembrane segments spans residues 441–461, 540–560, 570–590, 616–636, and 651–671; these read SAFGFISVLPGAFSAYRYVAL, RWLNGSFFAAIYAIVHFLDFL, FAFFIEFIFNTINMIFAWFAI, ILGVVFTWLYGVFLITCFVLS, and MCWFWAIIMIYLMFAAVFISV. N-linked (GlcNAc...) asparagine glycosylation is present at N685. The next 4 helical transmembrane spans lie at 697 to 717, 726 to 746, 825 to 845, and 870 to 890; these read MLIISLMSTYGIWLIASLIML, FAQYMLLTPTFTNVLNVYAFC, GVVLLWMVTNFGLAAIVLSSA, and IVLWSVAGLSAFKFIGAMWFL.

The protein belongs to the chitin synthase family. Class I subfamily.

Its subcellular location is the cell membrane. It catalyses the reaction [(1-&gt;4)-N-acetyl-beta-D-glucosaminyl](n) + UDP-N-acetyl-alpha-D-glucosamine = [(1-&gt;4)-N-acetyl-beta-D-glucosaminyl](n+1) + UDP + H(+). In terms of biological role, polymerizes chitin, a structural polymer of the cell wall and septum, by transferring the sugar moiety of UDP-GlcNAc to the non-reducing end of the growing chitin polymer. Shows additive effects in septum formation with CHS2, CHS3A, CHS4, CHS5, CHS6 and CHS7. Regulates mycelial growth and conidiation. Involved in virulence and mediates mycotoxin deoxinivalenol (DON) biosynthesis via the regulation of the expression of TRI4, TRI5 and TRI6. The polypeptide is Chitin synthase 1 (Gibberella zeae (strain ATCC MYA-4620 / CBS 123657 / FGSC 9075 / NRRL 31084 / PH-1) (Wheat head blight fungus)).